The chain runs to 122 residues: Large ribosomal subunit protein uL14 (122 aa).

The protein belongs to the universal ribosomal protein uL14 family. In terms of assembly, part of the 50S ribosomal subunit. Forms a cluster with proteins L3 and L19. In the 70S ribosome, L14 and L19 interact and together make contacts with the 16S rRNA in bridges B5 and B8.

Binds to 23S rRNA. Forms part of two intersubunit bridges in the 70S ribosome. The protein is Large ribosomal subunit protein uL14 of Xylella fastidiosa (strain M23).